The primary structure comprises 406 residues: Arginine biosynthesis bifunctional protein ArgJ (406 aa).

Substrate contacts are provided by T154, K180, T191, E278, N401, and T406. T191 functions as the Nucleophile in the catalytic mechanism.

It belongs to the ArgJ family. Heterotetramer of two alpha and two beta chains.

It is found in the cytoplasm. The catalysed reaction is N(2)-acetyl-L-ornithine + L-glutamate = N-acetyl-L-glutamate + L-ornithine. It catalyses the reaction L-glutamate + acetyl-CoA = N-acetyl-L-glutamate + CoA + H(+). The protein operates within amino-acid biosynthesis; L-arginine biosynthesis; L-ornithine and N-acetyl-L-glutamate from L-glutamate and N(2)-acetyl-L-ornithine (cyclic): step 1/1. It participates in amino-acid biosynthesis; L-arginine biosynthesis; N(2)-acetyl-L-ornithine from L-glutamate: step 1/4. Its function is as follows. Catalyzes two activities which are involved in the cyclic version of arginine biosynthesis: the synthesis of N-acetylglutamate from glutamate and acetyl-CoA as the acetyl donor, and of ornithine by transacetylation between N(2)-acetylornithine and glutamate. This Gloeobacter violaceus (strain ATCC 29082 / PCC 7421) protein is Arginine biosynthesis bifunctional protein ArgJ.